Reading from the N-terminus, the 659-residue chain is DNA ligase (659 aa).

NAD(+) contacts are provided by residues 32–36 (DAEYD), 81–82 (SL), and Glu110. The active-site N6-AMP-lysine intermediate is the Lys112. Residues Arg133, Glu168, Lys284, and Lys308 each contribute to the NAD(+) site. Zn(2+) contacts are provided by Cys402, Cys405, Cys420, and Cys425. Positions 582–659 (AKPQIFAGKS…SEEEFAELLP (78 aa)) constitute a BRCT domain.

This sequence belongs to the NAD-dependent DNA ligase family. LigA subfamily. Mg(2+) is required as a cofactor. The cofactor is Mn(2+).

It carries out the reaction NAD(+) + (deoxyribonucleotide)n-3'-hydroxyl + 5'-phospho-(deoxyribonucleotide)m = (deoxyribonucleotide)n+m + AMP + beta-nicotinamide D-nucleotide.. Its function is as follows. DNA ligase that catalyzes the formation of phosphodiester linkages between 5'-phosphoryl and 3'-hydroxyl groups in double-stranded DNA using NAD as a coenzyme and as the energy source for the reaction. It is essential for DNA replication and repair of damaged DNA. The protein is DNA ligase of Desulfitobacterium hafniense (strain Y51).